The primary structure comprises 336 residues: 4-hydroxythreonine-4-phosphate dehydrogenase (336 aa).

2 residues coordinate substrate: H142 and T143. A divalent metal cation contacts are provided by H172, H217, and H274. Residues K282, N291, and R300 each contribute to the substrate site.

This sequence belongs to the PdxA family. Homodimer. The cofactor is Zn(2+). It depends on Mg(2+) as a cofactor. Requires Co(2+) as cofactor.

The protein resides in the cytoplasm. It carries out the reaction 4-(phosphooxy)-L-threonine + NAD(+) = 3-amino-2-oxopropyl phosphate + CO2 + NADH. It participates in cofactor biosynthesis; pyridoxine 5'-phosphate biosynthesis; pyridoxine 5'-phosphate from D-erythrose 4-phosphate: step 4/5. Catalyzes the NAD(P)-dependent oxidation of 4-(phosphooxy)-L-threonine (HTP) into 2-amino-3-oxo-4-(phosphooxy)butyric acid which spontaneously decarboxylates to form 3-amino-2-oxopropyl phosphate (AHAP). The sequence is that of 4-hydroxythreonine-4-phosphate dehydrogenase from Trichlorobacter lovleyi (strain ATCC BAA-1151 / DSM 17278 / SZ) (Geobacter lovleyi).